The following is a 158-amino-acid chain: Cyclic pyranopterin monophosphate synthase (158 aa).

Substrate is bound by residues 75 to 77 and 113 to 114; these read LCH and ME. Aspartate 128 is an active-site residue.

This sequence belongs to the MoaC family. Homohexamer; trimer of dimers.

It catalyses the reaction (8S)-3',8-cyclo-7,8-dihydroguanosine 5'-triphosphate = cyclic pyranopterin phosphate + diphosphate. It participates in cofactor biosynthesis; molybdopterin biosynthesis. Its function is as follows. Catalyzes the conversion of (8S)-3',8-cyclo-7,8-dihydroguanosine 5'-triphosphate to cyclic pyranopterin monophosphate (cPMP). The polypeptide is Cyclic pyranopterin monophosphate synthase (Polynucleobacter asymbioticus (strain DSM 18221 / CIP 109841 / QLW-P1DMWA-1) (Polynucleobacter necessarius subsp. asymbioticus)).